We begin with the raw amino-acid sequence, 337 residues long: Meiotic driver wtf4 (337 aa).

The span at 1–29 (MKNKDYPLRSSMDELSTKNDNEIDLEKGP) shows a compositional bias: basic and acidic residues. Residues 1–40 (MKNKDYPLRSSMDELSTKNDNEIDLEKGPLPEYNSEDEST) are disordered. 6 consecutive transmembrane segments (helical) span residues 89–109 (LLISVLAVIVVFFTAWVCVNP), 119–139 (AFFVTIGITCPILLITIFCFF), 149–169 (CIKVTVIFLAQCVKVTAVGLY), 176–196 (VVIIWLLWVVICYTLFLRSKF), 210–230 (CSISAALLLFLLYVRLPFWTL), and 234–254 (FSGLFQVLGVQSCVVIVTKGL).

It belongs to the WTF family. In terms of assembly, homomer. Forms protein aggregates. The two isoforms can interact with each other and with themselves. High sequence similarity is required for their interaction.

It is found in the spore membrane. The protein resides in the vacuole membrane. The protein localises to the ascus epiplasm. Its subcellular location is the cytoplasm. It localises to the endoplasmic reticulum membrane. In terms of biological role, promotes unequal transmission of alleles from the parental zygote to progeny spores by acting as poison/antidote system where the poison and antidote proteins are produced from the same locus; the poison component is trans-acting and targets all spores within an ascus whereas the antidote component is spore-specific, leading to poisoning of all progeny that do not inherit the allele. Localizes isoform 2 to the vacuole thereby facilitating its degradation. Its function is as follows. Forms toxic aggregates that disrupt spore maturation. This chain is Meiotic driver wtf4, found in Schizosaccharomyces kambucha (Fission yeast).